The following is a 1233-amino-acid chain: Structural maintenance of chromosomes protein 1A (1233 aa).

ATP is bound at residue 32 to 39; sequence GPNGSGKS. Coiled coils occupy residues 104–124 and 163–503; these read EYKINNKVVQLHEYSEELEKL and ELAQ…KAEI. Positions 284-293 are enriched in basic and acidic residues; it reads IKEKDSELNQ. 2 disordered regions span residues 284 to 308 and 348 to 369; these read IKEKDSELNQKRPQYIKAKENTSHK and QEFEERMEEESQSQGRDLTLEE. Phosphoserine is present on residues Ser-358 and Ser-360. The 115-residue stretch at 515 to 629 folds into the SMC hinge domain; that stretch reads VYGRLIDLCQ…DNVEDARRIA (115 aa). Residues Lys-648 and Lys-713 each carry the N6-acetyllysine modification. The stretch at 667-935 forms a coiled coil; sequence DEKAVDKLKE…RHNLLQACKM (269 aa). The interval 947 to 969 is disordered; it reads MDDISQEEGSSQGEESVSGSQRT. A compositionally biased stretch (low complexity) spans 953–967; that stretch reads EEGSSQGEESVSGSQ. Phosphoserine is present on residues Ser-957, Ser-962, Ser-966, and Ser-970. A coiled-coil region spans residues 988 to 1068; the sequence is EDLKDAQAEE…FEQIKKERFD (81 aa). At Lys-1037 the chain carries N6-acetyllysine.

It belongs to the SMC family. SMC1 subfamily. Forms a heterodimer with SMC3 in cohesin complexes. Cohesin complexes are composed of the SMC1 (SMC1A or SMC1B) and SMC3 heterodimer attached via their SMC hinge domain, RAD21 which link them, and one STAG protein (STAG1, STAG2 or STAG3), which interacts with RAD21. In germ cell cohesin complexes, SMC1A is mutually exclusive with SMC1B. Interacts with STAG3. Found in a complex with CDCA5, SMC3 and RAD21, PDS5A/SCC-112 and PDS5B/APRIN. Found in a complex containing POLE and SMC3. Interacts with BRCA1, SYCP2, NDC80, RPGR and BRAT1. The cohesin complex interacts with the cohesin loading complex subunits NIPBL/Scc2 (via HEAT repeats) and MAU2/Scc4. NIPBL directly contacts all members of the complex, RAD21, SMC1A/B, SMC3 and STAG1. Post-translationally, phosphorylated upon ionizing radiation or DNA methylation. Phosphorylation of Ser-957 and Ser-966 activates it and is required for S-phase checkpoint activation. In terms of processing, ubiquitinated by the DCX(DCAF15) complex, leading to its degradation. Ubiquitous (at protein level).

It localises to the nucleus. The protein resides in the chromosome. The protein localises to the centromere. Functionally, involved in chromosome cohesion during cell cycle and in DNA repair. Involved in DNA repair via its interaction with BRCA1 and its related phosphorylation by ATM, and works as a downstream effector in the ATM/NBS1 branch of S-phase checkpoint. Central component of cohesin complex. The cohesin complex is required for the cohesion of sister chromatids after DNA replication. The cohesin complex apparently forms a large proteinaceous ring within which sister chromatids can be trapped. At anaphase, the complex is cleaved and dissociates from chromatin, allowing sister chromatids to segregate. The cohesin complex may also play a role in spindle pole assembly during mitosis. Involved in DNA repair via its interaction with BRCA1 and its related phosphorylation by ATM, or via its phosphorylation by ATR. Works as a downstream effector both in the ATM/NBS1 branch and in the ATR/MSH2 branch of S-phase checkpoint. The protein is Structural maintenance of chromosomes protein 1A (Smc1a) of Mus musculus (Mouse).